A 72-amino-acid chain; its full sequence is Crustacean hyperglycemic hormone A (72 aa).

Residue Gln-1 is modified to Pyrrolidone carboxylic acid. Position 3 is a D-phenylalanine; in form CHHA-II (Phe-3). 3 cysteine pairs are disulfide-bonded: Cys-7-Cys-43, Cys-23-Cys-39, and Cys-26-Cys-52. Position 72 is a valine amide (Val-72).

Post-translationally, stereoinversion of L-Phe (in CHHA-I) to D-Phe (in CHHA-II).

Its subcellular location is the secreted. In terms of biological role, hormone found in the sinus gland of isopods and decapods which controls the blood sugar level. Has a secretagogue action over the amylase released from the midgut gland. May act as a stress hormone and may be involved in the control of molting and reproduction. The polypeptide is Crustacean hyperglycemic hormone A (Cherax destructor (Common yabby crayfish)).